A 427-amino-acid chain; its full sequence is 3-phosphoshikimate 1-carboxyvinyltransferase (427 aa).

3 residues coordinate 3-phosphoshikimate: Lys22, Ser23, and Arg27. Phosphoenolpyruvate is bound at residue Lys22. Residues Gly96 and Arg124 each contribute to the phosphoenolpyruvate site. The 3-phosphoshikimate site is built by Ser169, Ser170, Gln171, Ser197, Asp313, Asn336, and Lys340. Gln171 is a phosphoenolpyruvate binding site. Residue Asp313 is the Proton acceptor of the active site. Residues Arg344, Arg386, and Lys411 each coordinate phosphoenolpyruvate.

Belongs to the EPSP synthase family. Monomer.

The protein resides in the cytoplasm. The enzyme catalyses 3-phosphoshikimate + phosphoenolpyruvate = 5-O-(1-carboxyvinyl)-3-phosphoshikimate + phosphate. It participates in metabolic intermediate biosynthesis; chorismate biosynthesis; chorismate from D-erythrose 4-phosphate and phosphoenolpyruvate: step 6/7. Its function is as follows. Catalyzes the transfer of the enolpyruvyl moiety of phosphoenolpyruvate (PEP) to the 5-hydroxyl of shikimate-3-phosphate (S3P) to produce enolpyruvyl shikimate-3-phosphate and inorganic phosphate. The sequence is that of 3-phosphoshikimate 1-carboxyvinyltransferase from Salmonella arizonae (strain ATCC BAA-731 / CDC346-86 / RSK2980).